The chain runs to 153 residues: MARNVLYPLYQLGGPQLRVFRTNFFIQLVRPGTAQPEDTVQFRIPMEMTRVDLRNYLERIYNVPVAAVRTRVQHGSHRKRDHRNVRIKKPDYKVAYVQLAHGQTFTFPDLFPEKDPRLEGSSVDEAQSTFMADEQQRQGSDPQRGGVPNWFSL.

A disordered region spans residues M131–L153.

The protein belongs to the universal ribosomal protein uL23 family. In terms of assembly, component of the mitochondrial ribosome large subunit (39S) which comprises a 16S rRNA and about 50 distinct proteins.

It is found in the mitochondrion. This Otolemur garnettii (Small-eared galago) protein is Large ribosomal subunit protein uL23m (MRPL23).